The chain runs to 446 residues: Tubulin beta-2 chain (446 aa).

GTP contacts are provided by Gln11, Glu69, Ser138, Gly142, Thr143, Gly144, Asn204, and Asn226. Residue Glu69 participates in Mg(2+) binding. The tract at residues 426 to 446 (QEAGIDEEEEYEEEAPAEHEE) is disordered. Residues 429–440 (GIDEEEEYEEEA) show a composition bias toward acidic residues.

Belongs to the tubulin family. Dimer of alpha and beta chains. A typical microtubule is a hollow water-filled tube with an outer diameter of 25 nm and an inner diameter of 15 nM. Alpha-beta heterodimers associate head-to-tail to form protofilaments running lengthwise along the microtubule wall with the beta-tubulin subunit facing the microtubule plus end conferring a structural polarity. Microtubules usually have 13 protofilaments but different protofilament numbers can be found in some organisms and specialized cells. The cofactor is Mg(2+).

The protein resides in the cytoplasm. The protein localises to the cytoskeleton. Functionally, tubulin is the major constituent of microtubules, a cylinder consisting of laterally associated linear protofilaments composed of alpha- and beta-tubulin heterodimers. Microtubules grow by the addition of GTP-tubulin dimers to the microtubule end, where a stabilizing cap forms. Below the cap, tubulin dimers are in GDP-bound state, owing to GTPase activity of alpha-tubulin. In Hypocrea virens (Gliocladium virens), this protein is Tubulin beta-2 chain.